Here is a 579-residue protein sequence, read N- to C-terminus: Probable cytochrome c oxidase subunit 1-alpha (579 aa).

The disordered stretch occupies residues 1 to 21; the sequence is MSILNEPQGAAAAEDSYENEL. The helical transmembrane segment at 44–64 threads the bilayer; the sequence is IGTLYLVTSFAFFCIGGVMAL. Fe(II)-heme a is bound at residue His-90. The next 6 membrane-spanning stretches (helical) occupy residues 93-113, 125-145, 174-194, 217-237, 262-282, and 295-315; these read IMLL…IMPL, LNMF…GGFL, MWIM…VNFI, VLLT…ALFA, LFWF…FGII, and FGYM…VTVW. Cu cation-binding residues include His-268 and Tyr-272. A cross-link (1'-histidyl-3'-tyrosine (His-Tyr)) is located at residues 268–272; that stretch reads HPEVY. Residues His-317 and His-318 each coordinate Cu cation. Transmembrane regions (helical) follow at residues 319–339, 363–383, 397–417, 437–457, and 480–500; these read MYVT…LIAV, MLWA…GVIL, FVVA…MFSG, ITFW…HWLG, and ISTI…YNVW. A heme a3-binding site is contributed by His-401. His-403 is a binding site for Fe(II)-heme a.

Belongs to the heme-copper respiratory oxidase family. In terms of assembly, associates with subunits II, III and IV to form cytochrome c oxidase. The cofactor is Cu(2+). It depends on heme as a cofactor.

The protein localises to the cell membrane. The enzyme catalyses 4 Fe(II)-[cytochrome c] + O2 + 8 H(+)(in) = 4 Fe(III)-[cytochrome c] + 2 H2O + 4 H(+)(out). Its pathway is energy metabolism; oxidative phosphorylation. In terms of biological role, cytochrome c oxidase is the component of the respiratory chain that catalyzes the reduction of oxygen to water. Subunits 1-3 form the functional core of the enzyme complex. CO I is the catalytic subunit of the enzyme. Electrons originating in cytochrome c are transferred via the copper A center of subunit 2 and heme A of subunit 1 to the bimetallic center formed by heme A3 and copper B. The sequence is that of Probable cytochrome c oxidase subunit 1-alpha (ctaD1) from Streptomyces avermitilis (strain ATCC 31267 / DSM 46492 / JCM 5070 / NBRC 14893 / NCIMB 12804 / NRRL 8165 / MA-4680).